The following is a 465-amino-acid chain: Gamma-aminobutyric acid receptor subunit rho-2 (465 aa).

An N-terminal signal peptide occupies residues 1-20; the sequence is MPYFSRLILFLFCLVVLVES. At 21–260 the chain is on the extracellular side; that stretch reads RKPKKRRWTG…LYINFTLRRH (240 aa). R105 provides a ligand contact to 4-aminobutanoate. Residue N120 is glycosylated (N-linked (GlcNAc...) asparagine). S169 is a binding site for 4-aminobutanoate. C178 and C192 are oxidised to a cystine. E197 contributes to the 4-aminobutanoate binding site. N-linked (GlcNAc...) asparagine glycosylation is present at N254. A helical transmembrane segment spans residues 261–281; that stretch reads IFFFLLQTYFPATLMVMLSWV. Residues 282–293 are Cytoplasmic-facing; it reads SFWIDRRAVPAR. The chain crosses the membrane as a helical span at residues 294-314; the sequence is VSLGITTVLTMSTIITGVNAS. Residues 315 to 325 lie on the Extracellular side of the membrane; sequence MPRVSYIKAVD. The chain crosses the membrane as a helical span at residues 326 to 346; it reads IYLWVSFVFVFLSVLEYAAVN. The Cytoplasmic segment spans residues 347-444; sequence YLTTVQERKE…FQNTHAIDKY (98 aa). The chain crosses the membrane as a helical span at residues 445 to 465; it reads SRLIFPASYIFFNLIYWSVFA.

Belongs to the ligand-gated ion channel (TC 1.A.9) family. Gamma-aminobutyric acid receptor (TC 1.A.9.5) subfamily. GABRR2 sub-subfamily. In terms of assembly, three rho subunits (rho-1/GBRR1, rho-2/GBRR2 and rho-3/GBRR3) coassemble either to form functional homopentamers or heteropentamers. Rho-2 is unable to form a functional homopentamer. Interacts with SQSTM1.

The protein localises to the postsynaptic cell membrane. It localises to the cell membrane. It carries out the reaction chloride(in) = chloride(out). Rho subunit of the pentameric ligand-gated chloride channels responsible for mediating the effects of gamma-aminobutyric acid (GABA), the major inhibitory neurotransmitter in the brain. Rho-containing GABA-gated chloride channels are a subclass of GABA(A) receptors (GABAARs) entirely composed of rho subunits, where GABA molecules bind at the rho intersubunit interfaces. When activated by GABA, rho-GABAARs selectively allow the flow of chloride anions across the cell membrane down their electrochemical gradient. Rho-2 GABAARs may contribute to the regulation of glial development in the cerebellum by controlling extrasynaptic transmission. Rho-2 GABAARs are also involved in neuronal tonic (extrasynaptic) and phasic (synaptic) transmission in the Purkinje neurons of the cerebellum. Rho-2 GABAARs expressed in retina may play a role in retinal neurotransmission. This chain is Gamma-aminobutyric acid receptor subunit rho-2 (GABRR2), found in Bos taurus (Bovine).